Reading from the N-terminus, the 528-residue chain is GMP synthase [glutamine-hydrolyzing] (528 aa).

One can recognise a Glutamine amidotransferase type-1 domain in the interval 13 to 204; it reads AIVILDFGSQ…VYHICGCEPD (192 aa). The active-site Nucleophile is Cys90. Residues His178 and Glu180 contribute to the active site. The 199-residue stretch at 205–403 folds into the GMPS ATP-PPase domain; that stretch reads WTTSAFIDEA…LGLPEEIVRR (199 aa). 232-238 lines the ATP pocket; the sequence is SGGVDSS.

Homodimer.

It catalyses the reaction XMP + L-glutamine + ATP + H2O = GMP + L-glutamate + AMP + diphosphate + 2 H(+). Its pathway is purine metabolism; GMP biosynthesis; GMP from XMP (L-Gln route): step 1/1. Functionally, catalyzes the synthesis of GMP from XMP. This is GMP synthase [glutamine-hydrolyzing] from Parasynechococcus marenigrum (strain WH8102).